A 315-amino-acid polypeptide reads, in one-letter code: Methionyl-tRNA formyltransferase (315 aa).

113–116 (SLLP) is a (6S)-5,6,7,8-tetrahydrofolate binding site.

The protein belongs to the Fmt family.

The enzyme catalyses L-methionyl-tRNA(fMet) + (6R)-10-formyltetrahydrofolate = N-formyl-L-methionyl-tRNA(fMet) + (6S)-5,6,7,8-tetrahydrofolate + H(+). Attaches a formyl group to the free amino group of methionyl-tRNA(fMet). The formyl group appears to play a dual role in the initiator identity of N-formylmethionyl-tRNA by promoting its recognition by IF2 and preventing the misappropriation of this tRNA by the elongation apparatus. The protein is Methionyl-tRNA formyltransferase of Escherichia coli (strain SE11).